The following is a 220-amino-acid chain: Homeobox-leucine zipper protein ATHB-21 (220 aa).

The tract at residues 26-48 is disordered; it reads VPQQGGEAKPTRRRKRKSKSVVV. Residues 58–117 constitute a DNA-binding region (homeobox); the sequence is GWFRKRKLSDEQVRMLEISFEDDHKLESERKDRLASELGLDPRQVAVWFQNRRARWKNKR. Positions 118–146 are leucine-zipper; that stretch reads VEDEYTKLKNAYETTVVEKCRLDSEVIHL.

Belongs to the HD-ZIP homeobox family. Class I subfamily. In terms of tissue distribution, widely expressed.

Its subcellular location is the nucleus. Probable transcription factor. This Arabidopsis thaliana (Mouse-ear cress) protein is Homeobox-leucine zipper protein ATHB-21 (ATHB-21).